The primary structure comprises 79 residues: MDIKSEVIEIIDELFMEDVSDMMDEDLFDAGVLDSMGTVELIVEIENRFDIRVPVTEFGRDDWNTANKIIAGIVELQNA.

The Carrier domain occupies 1–77 (MDIKSEVIEI…KIIAGIVELQ (77 aa)). Ser35 is subject to O-(pantetheine 4'-phosphoryl)serine.

The protein belongs to the DltC family. In terms of processing, 4'-phosphopantetheine is transferred from CoA to a specific serine of apo-DCP.

It is found in the cytoplasm. The protein operates within cell wall biogenesis; lipoteichoic acid biosynthesis. In terms of biological role, carrier protein involved in the D-alanylation of lipoteichoic acid (LTA). The loading of thioester-linked D-alanine onto DltC is catalyzed by D-alanine--D-alanyl carrier protein ligase DltA. The DltC-carried D-alanyl group is further transferred to cell membrane phosphatidylglycerol (PG) by forming an ester bond, probably catalyzed by DltD. D-alanylation of LTA plays an important role in modulating the properties of the cell wall in Gram-positive bacteria, influencing the net charge of the cell wall. The sequence is that of D-alanyl carrier protein from Streptococcus pneumoniae serotype 2 (strain D39 / NCTC 7466).